The following is a 968-amino-acid chain: RNA polymerase-associated protein RapA (968 aa).

Residues E163–D332 enclose the Helicase ATP-binding domain. Position 176–183 (D176–T183) interacts with ATP. The DEAH box motif lies at D278–H281. Residues R491–L655 form the Helicase C-terminal domain.

Belongs to the SNF2/RAD54 helicase family. RapA subfamily. As to quaternary structure, interacts with the RNAP. Has a higher affinity for the core RNAP than for the holoenzyme. Its ATPase activity is stimulated by binding to RNAP.

Transcription regulator that activates transcription by stimulating RNA polymerase (RNAP) recycling in case of stress conditions such as supercoiled DNA or high salt concentrations. Probably acts by releasing the RNAP, when it is trapped or immobilized on tightly supercoiled DNA. Does not activate transcription on linear DNA. Probably not involved in DNA repair. The sequence is that of RNA polymerase-associated protein RapA from Shewanella baltica (strain OS223).